Reading from the N-terminus, the 497-residue chain is 4,4'-diaponeurosporene oxygenase (497 aa).

FAD is bound at residue 7–19; sequence VIGGGLGGISAAI.

This sequence belongs to the carotenoid/retinoid oxidoreductase family. CrtP subfamily. Requires FAD as cofactor.

The catalysed reaction is all-trans-4,4'-diaponeurosporene + 2 AH2 + 2 O2 = 4,4'-diaponeurosporenal + 2 A + 3 H2O. It participates in carotenoid biosynthesis; staphyloxanthin biosynthesis; staphyloxanthin from farnesyl diphosphate: step 3/5. Functionally, involved in the biosynthesis of the yellow-orange carotenoid staphyloxanthin, which plays a role in the virulence via its protective function against oxidative stress. Catalyzes the oxidation of the terminal methyl side group of 4,4'-diaponeurosporene to form 4,4'-diaponeurosporen-4-al. The polypeptide is 4,4'-diaponeurosporene oxygenase (Staphylococcus aureus (strain MSSA476)).